We begin with the raw amino-acid sequence, 79 residues long: UPF0154 protein Lm4b_01315 (79 aa).

Residues 2–22 traverse the membrane as a helical segment; it reads WIYILVGIICLLAGLAGGFFI. Residues 57 to 66 show a composition bias toward polar residues; the sequence is KINQMMSAMN. The disordered stretch occupies residues 57 to 79; sequence KINQMMSAMNKQQEKEKPKKTKK.

It belongs to the UPF0154 family.

Its subcellular location is the cell membrane. The sequence is that of UPF0154 protein Lm4b_01315 from Listeria monocytogenes serotype 4b (strain CLIP80459).